Consider the following 287-residue polypeptide: Histone H1 (287 aa).

Residues 1–11 (MATEEPVIVNE) show a composition bias toward low complexity. Disordered regions lie at residues 1–58 (MATE…THPP) and 120–287 (YKLP…RGRK). Residues 33–51 (GKAKKETKAKKPAAPRKRS) show a composition bias toward basic residues. Residues 55-124 (THPPYFEMIK…KVKNSYKLPS (70 aa)) enclose the H15 domain. Basic residues predominate over residues 135–202 (AKKKPAAAKS…KAKPVAKAKP (68 aa)). Positions 203-248 (KAAAAAKPKAAVKPKAAPAKTKAAVKPNLKAKTTTAKVAKTATRTT) are enriched in low complexity. Residues 276–287 (PAKKATPKRGRK) are compositionally biased toward basic residues.

The protein belongs to the histone H1/H5 family.

It localises to the nucleus. The protein localises to the chromosome. Functionally, histones H1 are necessary for the condensation of nucleosome chains into higher-order structures. In Solanum lycopersicum (Tomato), this protein is Histone H1.